We begin with the raw amino-acid sequence, 243 residues long: Tryptophan synthase alpha chain (243 aa).

Residues Glu-31 and Asp-42 each act as proton acceptor in the active site.

This sequence belongs to the TrpA family. As to quaternary structure, tetramer of two alpha and two beta chains.

The catalysed reaction is (1S,2R)-1-C-(indol-3-yl)glycerol 3-phosphate + L-serine = D-glyceraldehyde 3-phosphate + L-tryptophan + H2O. The protein operates within amino-acid biosynthesis; L-tryptophan biosynthesis; L-tryptophan from chorismate: step 5/5. In terms of biological role, the alpha subunit is responsible for the aldol cleavage of indoleglycerol phosphate to indole and glyceraldehyde 3-phosphate. The protein is Tryptophan synthase alpha chain of Staphylococcus haemolyticus (strain JCSC1435).